Here is a 143-residue protein sequence, read N- to C-terminus: MFMGEYEHQLDTKGRMIVPSKFRYDLNERFIITRGLDKCLFGYTLEEWQVIEEKMKTLPMTKKDARKFMRMFFSGAVEVELDKQGRINIPQNLRQYANLSKECTVIGVSNRIEIWDRETWSSFYDESEESFEDIAEDLIDFDF.

SpoVT-AbrB domains follow at residues 5–47 (EYEH…TLEE) and 76–119 (AVEV…DRET).

This sequence belongs to the MraZ family. As to quaternary structure, forms oligomers.

Its subcellular location is the cytoplasm. It is found in the nucleoid. This Staphylococcus saprophyticus subsp. saprophyticus (strain ATCC 15305 / DSM 20229 / NCIMB 8711 / NCTC 7292 / S-41) protein is Transcriptional regulator MraZ.